The chain runs to 391 residues: Na(+)/H(+) antiporter NhaA 1 (391 aa).

11 helical membrane passes run 19–39, 56–76, 98–118, 128–148, 157–177, 180–200, 208–228, 264–284, 297–317, 335–355, and 364–384; these read FLAS…AALI, VWLG…IFFL, ALPG…YIAI, GWAI…SLLG, VFLA…IAFF, SGLN…LIAL, LLPY…SGVH, VAFA…LSGI, VALG…VLAI, GVAI…NLAF, and EVKV…ILLL.

The protein belongs to the NhaA Na(+)/H(+) (TC 2.A.33) antiporter family.

It is found in the cell inner membrane. It catalyses the reaction Na(+)(in) + 2 H(+)(out) = Na(+)(out) + 2 H(+)(in). Na(+)/H(+) antiporter that extrudes sodium in exchange for external protons. The polypeptide is Na(+)/H(+) antiporter NhaA 1 (Pseudomonas savastanoi pv. phaseolicola (strain 1448A / Race 6) (Pseudomonas syringae pv. phaseolicola (strain 1448A / Race 6))).